We begin with the raw amino-acid sequence, 161 residues long: Peroxynitrite isomerase 2 (161 aa).

The GXWXGXG signature appears at 17-23 (GTWAGQG). Residue histidine 152 participates in heme b binding.

This sequence belongs to the nitrobindin family. In terms of assembly, homodimer. Requires heme b as cofactor.

The catalysed reaction is peroxynitrite = nitrate. It participates in nitrogen metabolism. In terms of biological role, heme-binding protein able to scavenge peroxynitrite and to protect free L-tyrosine against peroxynitrite-mediated nitration, by acting as a peroxynitrite isomerase that converts peroxynitrite to nitrate. Therefore, this protein likely plays a role in peroxynitrite sensing and in the detoxification of reactive nitrogen and oxygen species (RNS and ROS, respectively). Is able to bind nitric oxide (NO) in vitro, but may act as a sensor of peroxynitrite levels in vivo. In Mycobacterium marinum (strain ATCC BAA-535 / M), this protein is Peroxynitrite isomerase 2.